The chain runs to 290 residues: Poly-beta-1,6-N-acetyl-D-glucosamine N-deacetylase (290 aa).

An N-terminal signal peptide occupies residues 1–28 (MKYRKLIILVLSILIILPVSTLDGHHIA). The region spanning 114–290 (RSVWINFDDM…KRWDGFHEKD (177 aa)) is the NodB homology domain.

Belongs to the polysaccharide deacetylase family.

It localises to the secreted. Its subcellular location is the cell wall. Its function is as follows. Catalyzes the N-deacetylation of poly-beta-1,6-N-acetyl-D-glucosamine (PNAG, also referred to as PIA), a biofilm adhesin polysaccharide. N-deacetylation is crucial for attachment of the polysaccharide to the bacterial cell surface; it leads to the introduction of positive charges in the otherwise neutral PIA polymer, allowing electrostatic interactions. In Staphylococcus aureus (strain MRSA252), this protein is Poly-beta-1,6-N-acetyl-D-glucosamine N-deacetylase (icaB).